The primary structure comprises 893 residues: Protein FAM186B (893 aa).

Disordered stretches follow at residues 177–207 (GWQG…TMNT), 327–376 (QAED…PSPM), 537–557 (LEKE…DVER), 574–611 (LSLV…QRPM), and 806–827 (KPKK…GPTY). 2 stretches are compositionally biased toward polar residues: residues 179–188 (QGRSPQTSPS) and 197–207 (QMLQDQHTMNT). Residues 303 to 331 (RYHDLLLMKQALEFQLKKAQNATGQAEDL) are a coiled coil. Residues 342 to 353 (SERETLPRKETV) are compositionally biased toward basic and acidic residues.

This sequence belongs to the FAM186 family.

This chain is Protein FAM186B (FAM186B), found in Homo sapiens (Human).